Reading from the N-terminus, the 230-residue chain is MTTLTARPEAITFDPQQSALIVVDMQNAYATPGGYLDLAGFDVSTTRPVIANIQTAVTAARAAGMLIIWFQNGWDEQYVEAGGPGSPNFHKSNALKTMRKQPQLQGKLLAKGSWDYQLVDELVPQPGDIVLPKPRYSGFFNTPLDSILRSRGIRHLVFTSIATNVCVESTLRDGFFLEYFGVVLEDATHQAGPEFVQKAALFNIETFFGWVSDVETFCDALSPTSFARIA.

Asp-24 functions as the Proton acceptor in the catalytic mechanism. Lys-133 is an active-site residue. Catalysis depends on Cys-166, which acts as the Nucleophile.

Belongs to the isochorismatase family. RutB subfamily.

It catalyses the reaction (Z)-3-ureidoacrylate + H2O + H(+) = (Z)-3-aminoacrylate + NH4(+) + CO2. The catalysed reaction is (Z)-3-ureidoacrylate + H2O = (Z)-3-aminoacrylate + carbamate + H(+). The enzyme catalyses (Z)-2-methylureidoacrylate + H2O + H(+) = (Z)-2-methylaminoacrylate + NH4(+) + CO2. Hydrolyzes ureidoacrylate to form aminoacrylate and carbamate. The carbamate hydrolyzes spontaneously, thereby releasing one of the nitrogen atoms of the pyrimidine ring as ammonia and one of its carbon atoms as CO2. This is Ureidoacrylate amidohydrolase RutB from Escherichia coli O157:H7.